A 242-amino-acid chain; its full sequence is Sensory transduction protein LytT (242 aa).

Residues 2–116 (HVLIVDDEPL…KITQVIEKAS (115 aa)) form the Response regulatory domain. The HTH LytTR-type domain occupies 137–241 (IPIQGEDRIY…VKEFKEKLGL (105 aa)).

Phosphorylated by LytS.

Its subcellular location is the cytoplasm. In terms of biological role, member of the two-component regulatory system LytS/LytT that probably regulates genes involved in cell wall metabolism. The chain is Sensory transduction protein LytT (lytT) from Enterococcus faecalis (strain ATCC 700802 / V583).